The sequence spans 403 residues: CinA-like protein (403 aa).

Belongs to the CinA family.

The chain is CinA-like protein from Petrotoga mobilis (strain DSM 10674 / SJ95).